The following is a 430-amino-acid chain: Cell division protein FtsZ (430 aa).

Residues 76–80, 163–165, Glu-194, Arg-198, and Asp-242 each bind GTP; these read GGGCN and GTG. The disordered stretch occupies residues 374-418; sequence KEKPQAKTSSKPVLSGPPAGVETVPSTTTPEDPLGEIPMAPELDI.

The protein belongs to the FtsZ family. Homodimer. Polymerizes to form a dynamic ring structure in a strictly GTP-dependent manner. Interacts directly with several other division proteins.

It localises to the cytoplasm. Essential cell division protein that forms a contractile ring structure (Z ring) at the future cell division site. The regulation of the ring assembly controls the timing and the location of cell division. One of the functions of the FtsZ ring is to recruit other cell division proteins to the septum to produce a new cell wall between the dividing cells. Binds GTP and shows GTPase activity. In Synechocystis sp. (strain ATCC 27184 / PCC 6803 / Kazusa), this protein is Cell division protein FtsZ.